Reading from the N-terminus, the 281-residue chain is Foldase protein PrsA (281 aa).

A signal peptide spans 1–18 (MKKWMMAAAVVSLMALSA). Cys19 carries the N-palmitoyl cysteine lipid modification. Cys19 carries S-diacylglycerol cysteine lipidation. The 91-residue stretch at 133–223 (KPKIRASHIL…YGYHIIKVTD (91 aa)) folds into the PpiC domain.

Belongs to the PrsA family.

The protein resides in the cell membrane. The catalysed reaction is [protein]-peptidylproline (omega=180) = [protein]-peptidylproline (omega=0). In terms of biological role, plays a major role in protein secretion by helping the post-translocational extracellular folding of several secreted proteins. This chain is Foldase protein PrsA, found in Geobacillus kaustophilus (strain HTA426).